Consider the following 444-residue polypeptide: Spermidine/putrescine import ATP-binding protein PotA (444 aa).

The ABC transporter domain maps to 11 to 332 (ISLVDVDKEF…PVNKWVANFI (322 aa)). An ATP-binding site is contributed by 43-50 (GPSGSGKT). An insert region spans residues 111–201 (RIKKKAEEIP…ESFKKKYLTR (91 aa)).

Belongs to the ABC transporter superfamily. Spermidine/putrescine importer (TC 3.A.1.11.1) family. The complex is composed of two ATP-binding proteins (PotA), two transmembrane proteins (PotB and PotC) and a solute-binding protein (PotD).

It is found in the cell membrane. It catalyses the reaction ATP + H2O + polyamine-[polyamine-binding protein]Side 1 = ADP + phosphate + polyamineSide 2 + [polyamine-binding protein]Side 1.. Its function is as follows. Part of the ABC transporter complex PotABCD involved in spermidine/putrescine import. Responsible for energy coupling to the transport system. The sequence is that of Spermidine/putrescine import ATP-binding protein PotA from Mesomycoplasma hyopneumoniae (strain 232) (Mycoplasma hyopneumoniae).